A 456-amino-acid chain; its full sequence is Phosphoglucomutase/phosphomannomutase (456 aa).

Ser101 functions as the Phosphoserine intermediate in the catalytic mechanism. Positions 101, 243, 245, and 247 each coordinate Mg(2+). Ser101 carries the phosphoserine; by autocatalysis modification.

Belongs to the phosphohexose mutase family. As to quaternary structure, homotetramer. The cofactor is Mg(2+). Activated by phosphorylation.

It carries out the reaction alpha-D-glucose 1-phosphate = alpha-D-glucose 6-phosphate. The enzyme catalyses alpha-D-mannose 1-phosphate = D-mannose 6-phosphate. Functionally, catalyzes the interconversion of glucose 1-phosphate and glucose 6-phosphate, and the interconversion of mannose 1-phosphate and mannose 6-phosphate. Also displays low activity with deoxyribose 1-phosphate and glucosamine 1-phosphate. This is Phosphoglucomutase/phosphomannomutase from Thermococcus kodakarensis (strain ATCC BAA-918 / JCM 12380 / KOD1) (Pyrococcus kodakaraensis (strain KOD1)).